The sequence spans 558 residues: Formate--tetrahydrofolate ligase (558 aa).

66–73 (TPAGEGKT) is a binding site for ATP.

This sequence belongs to the formate--tetrahydrofolate ligase family.

It catalyses the reaction (6S)-5,6,7,8-tetrahydrofolate + formate + ATP = (6R)-10-formyltetrahydrofolate + ADP + phosphate. It functions in the pathway one-carbon metabolism; tetrahydrofolate interconversion. This Neisseria meningitidis serogroup B (strain ATCC BAA-335 / MC58) protein is Formate--tetrahydrofolate ligase.